The chain runs to 249 residues: MRKPVMAGNWKMYKTPAETIAFFEKFRPLVEKSSHCEIVICPPFTNLAAAVDAVRGTSIRVGAQNVGWAKEGAFTGEVSGPMLNAMGVSHVIIGHSERRQYFNETDETVLKRTQAALEFGLTPIVCVGELLADREGGRTEAVLAGQFQKGIAGLTEQQFAKIVIAYEPVWAIGTGKTATPEIAADTHRAIRGQVREKFGKEAADAVRILYGGSVKPDNAKVLMGQPEIDGVLVGGAALDPVSFASIVNF.

Position 9-11 (asparagine 9–lysine 11) interacts with substrate. Catalysis depends on histidine 95, which acts as the Electrophile. Glutamate 167 serves as the catalytic Proton acceptor. Substrate contacts are provided by residues glycine 173, serine 213, and glycine 234–glycine 235.

It belongs to the triosephosphate isomerase family. Homodimer.

It is found in the cytoplasm. It catalyses the reaction D-glyceraldehyde 3-phosphate = dihydroxyacetone phosphate. The protein operates within carbohydrate biosynthesis; gluconeogenesis. Its pathway is carbohydrate degradation; glycolysis; D-glyceraldehyde 3-phosphate from glycerone phosphate: step 1/1. Its function is as follows. Involved in the gluconeogenesis. Catalyzes stereospecifically the conversion of dihydroxyacetone phosphate (DHAP) to D-glyceraldehyde-3-phosphate (G3P). The sequence is that of Triosephosphate isomerase from Solibacter usitatus (strain Ellin6076).